We begin with the raw amino-acid sequence, 316 residues long: Transaldolase A (316 aa).

K131 serves as the catalytic Schiff-base intermediate with substrate.

It belongs to the transaldolase family. Type 1 subfamily. As to quaternary structure, homodimer.

Its subcellular location is the cytoplasm. It carries out the reaction D-sedoheptulose 7-phosphate + D-glyceraldehyde 3-phosphate = D-erythrose 4-phosphate + beta-D-fructose 6-phosphate. Its pathway is carbohydrate degradation; pentose phosphate pathway; D-glyceraldehyde 3-phosphate and beta-D-fructose 6-phosphate from D-ribose 5-phosphate and D-xylulose 5-phosphate (non-oxidative stage): step 2/3. Functionally, transaldolase is important for the balance of metabolites in the pentose-phosphate pathway. The polypeptide is Transaldolase A (talA) (Escherichia coli O157:H7).